The following is a 259-amino-acid chain: uncharacterized protein (259 aa).

The Radical SAM core domain occupies 19 to 249; the sequence is TKIPGAKYVI…DEVINTIKKK (231 aa). [4Fe-4S] cluster contacts are provided by cysteine 34, cysteine 38, and cysteine 41.

The cofactor is [4Fe-4S] cluster.

This is an uncharacterized protein from Methanocaldococcus jannaschii (strain ATCC 43067 / DSM 2661 / JAL-1 / JCM 10045 / NBRC 100440) (Methanococcus jannaschii).